Consider the following 454-residue polypeptide: Argininosuccinate lyase (454 aa).

This sequence belongs to the lyase 1 family. Argininosuccinate lyase subfamily.

The protein localises to the cytoplasm. The catalysed reaction is 2-(N(omega)-L-arginino)succinate = fumarate + L-arginine. Its pathway is amino-acid biosynthesis; L-arginine biosynthesis; L-arginine from L-ornithine and carbamoyl phosphate: step 3/3. This Herpetosiphon aurantiacus (strain ATCC 23779 / DSM 785 / 114-95) protein is Argininosuccinate lyase.